Consider the following 356-residue polypeptide: Heparan sulfate 2-O-sulfotransferase 1 (356 aa).

At 1–11 the chain is on the cytoplasmic side; sequence MGLLRIMMPPK. A helical; Signal-anchor for type II membrane protein membrane pass occupies residues 12 to 28; the sequence is LQLLAVVAFAVAMLFLE. A coiled-coil region spans residues 24–51; it reads MLFLENQIQKLEESRSKLERAIARHEVR. Topologically, residues 29-356 are lumenal; the sequence is NQIQKLEESR…FYEKIYPKSN (328 aa). The adenosine 3',5'-bisphosphate site is built by Lys83, Thr84, Ala85, Ser86, Thr87, and Ser88. Residues Asn108 and Asn127 are each glycosylated (N-linked (GlcNAc...) asparagine). Residues His140 and His142 contribute to the active site. Residues Arg164 and Ser172 each contribute to the adenosine 3',5'-bisphosphate site. Cystine bridges form between Cys201–Cys209 and Cys222–Cys228. Residues Tyr279, Ser285, Thr290, and Lys293 each contribute to the adenosine 3',5'-bisphosphate site.

Belongs to the sulfotransferase 3 family. Homotrimer. Interacts with the C5-epimerase GLCE. Post-translationally, N-glycosylated.

It localises to the golgi apparatus membrane. Functionally, catalyzes the transfer of a sulfo group from 3'-phospho-5'-adenylyl sulfate (PAPS) to the 2-OH position of iduronic acid (IdoA) or glucuronic acid (GlcA) within the heparan sulfate (HS) chain and participates in HS biosynthesis. Required for metanephric development of kidney formation, suggesting that 2-O-sulfation within HS is essential for signaling between ureteric bud and metanephric mesenchyme. The polypeptide is Heparan sulfate 2-O-sulfotransferase 1 (Pongo abelii (Sumatran orangutan)).